Reading from the N-terminus, the 129-residue chain is MAFDFPDQFRFADSHEYVRQEAELVRVGLSAYAVDQLGDIVFVDLPEVGDDLSRGTSFGTVESVKAVEEMYAPITGKVIQRNEAVLANPEELQNDPHGEGWLLVIRPSELAQIEELMDSATYSAKVAAA.

The Lipoyl-binding domain occupies leucine 24 to arginine 106. Lysine 65 is modified (N6-lipoyllysine).

This sequence belongs to the GcvH family. As to quaternary structure, the glycine cleavage system is composed of four proteins: P, T, L and H. (R)-lipoate serves as cofactor.

Its function is as follows. The glycine cleavage system catalyzes the degradation of glycine. The H protein shuttles the methylamine group of glycine from the P protein to the T protein. In Synechococcus sp. (strain CC9311), this protein is Glycine cleavage system H protein.